An 816-amino-acid chain; its full sequence is Larval serum protein 1 alpha chain (816 aa).

Residues 1–16 (MKFAIAFLACVAVVTA) form the signal peptide.

This sequence belongs to the hemocyanin family. Heterohexamer, composed of three subunits, alpha, beta and gamma. In terms of tissue distribution, larval hemolymph.

It localises to the secreted. The protein localises to the extracellular space. Larval storage protein (LSP) which may serve as a store of amino acids for synthesis of adult proteins. The sequence is that of Larval serum protein 1 alpha chain (Lsp1alpha) from Drosophila melanogaster (Fruit fly).